A 406-amino-acid chain; its full sequence is Tryptophan synthase beta chain (406 aa).

Lysine 99 carries the N6-(pyridoxal phosphate)lysine modification.

The protein belongs to the TrpB family. As to quaternary structure, tetramer of two alpha and two beta chains. Pyridoxal 5'-phosphate is required as a cofactor.

It catalyses the reaction (1S,2R)-1-C-(indol-3-yl)glycerol 3-phosphate + L-serine = D-glyceraldehyde 3-phosphate + L-tryptophan + H2O. It participates in amino-acid biosynthesis; L-tryptophan biosynthesis; L-tryptophan from chorismate: step 5/5. In terms of biological role, the beta subunit is responsible for the synthesis of L-tryptophan from indole and L-serine. The polypeptide is Tryptophan synthase beta chain (Rhizobium leguminosarum bv. trifolii (strain WSM2304)).